A 137-amino-acid polypeptide reads, in one-letter code: MSKKVENLMLGSWLTALTAMLGSLYFSEIRMYEPCTLCWYQRIIMYPLVLILFIGYLKRDVNVALYSLWFSLIGMFTSLYHYSIQKLPFLTDAAPACGRVPCTGQYINWFGFVTIPFLAFTAFVIIFICSLLIIREK.

The helical transmembrane segment at 6–25 threads the bilayer; sequence ENLMLGSWLTALTAMLGSLY. Cysteine 35 and cysteine 38 are oxidised to a cystine. The next 2 helical transmembrane spans lie at 40 to 59 and 66 to 83; these read YQRI…YLKR and YSLW…YHYS. Residues cysteine 97 and cysteine 102 are joined by a disulfide bond. The helical transmembrane segment at 111–133 threads the bilayer; that stretch reads GFVTIPFLAFTAFVIIFICSLLI.

It belongs to the DsbB family. BdbC subfamily.

It localises to the cell membrane. Its function is as follows. Required for disulfide bond formation in some proteins. This Halalkalibacterium halodurans (strain ATCC BAA-125 / DSM 18197 / FERM 7344 / JCM 9153 / C-125) (Bacillus halodurans) protein is Probable disulfide formation protein C.